A 315-amino-acid chain; its full sequence is MSEEKKQWSISDIEAIYQQPFNDLLYQAHAIHRTYHDPNSLQFATLLSIKTGACPEDCGYCSQSGHYKTHVEKEKLMSVEEVLQCAKEAKEGGAKRFCMGAAWRCPPDKAIPQLKEMIEGVKSLGLETCMTLGMLTKEQASHLKEAGLDYYNHNIDTSPSYYDKVVTTRKFSDRLDTLNNVRSAGINVCCGGILGLGETREDRIEFLLTLANMETPPESVPINRLIPVEGTPLAQAERVEGIELVRTIATARILMPKSAIRLTAGRTEMSDELQALCYFAGANSVFIGDKLLTEDNPQRFKDKTLFNKLGLTEMV.

Residues 39–266 (NSLQFATLLS…KSAIRLTAGR (228 aa)) enclose the Radical SAM core domain. 3 residues coordinate [4Fe-4S] cluster: Cys54, Cys58, and Cys61. Residues Cys98, Cys129, Cys189, and Arg261 each coordinate [2Fe-2S] cluster.

It belongs to the radical SAM superfamily. Biotin synthase family. Homodimer. [4Fe-4S] cluster is required as a cofactor. The cofactor is [2Fe-2S] cluster.

The catalysed reaction is (4R,5S)-dethiobiotin + (sulfur carrier)-SH + 2 reduced [2Fe-2S]-[ferredoxin] + 2 S-adenosyl-L-methionine = (sulfur carrier)-H + biotin + 2 5'-deoxyadenosine + 2 L-methionine + 2 oxidized [2Fe-2S]-[ferredoxin]. The protein operates within cofactor biosynthesis; biotin biosynthesis; biotin from 7,8-diaminononanoate: step 2/2. Its function is as follows. Catalyzes the conversion of dethiobiotin (DTB) to biotin by the insertion of a sulfur atom into dethiobiotin via a radical-based mechanism. This Legionella pneumophila (strain Lens) protein is Biotin synthase.